A 359-amino-acid chain; its full sequence is WAT1-related protein At4g28040 (359 aa).

Transmembrane regions (helical) follow at residues 10–30 (LALV…KAAF), 37–57 (TVFV…ISFI), 66–86 (PSLG…GVTV), 103–123 (ACAM…IVGF), 133–153 (SVAK…MTFL), 170–190 (WLLG…WLIL), 204–224 (TSAC…LALG), 240–260 (SCCI…AWIV), 266–286 (VFSA…GALY), and 292–312 (YLGS…VLWG). The region spanning 18-131 (TSAGVALFTK…GFESIKRRSM (114 aa)) is the EamA 1 domain. The 112-residue stretch at 199–310 (PDHLYTSACT…AIILGLYIVL (112 aa)) folds into the EamA 2 domain.

It belongs to the drug/metabolite transporter (DMT) superfamily. Plant drug/metabolite exporter (P-DME) (TC 2.A.7.4) family.

The protein resides in the membrane. The polypeptide is WAT1-related protein At4g28040 (Arabidopsis thaliana (Mouse-ear cress)).